Consider the following 234-residue polypeptide: Ribitol-5-phosphate cytidylyltransferase (234 aa).

CTP is bound by residues 7–10 and 79–85; these read LAGG and GSIVQKS.

The protein belongs to the IspD/TarI cytidylyltransferase family. TarI subfamily.

The catalysed reaction is D-ribitol 5-phosphate + CTP + H(+) = CDP-L-ribitol + diphosphate. The protein operates within cell wall biogenesis; poly(ribitol phosphate) teichoic acid biosynthesis. Catalyzes the transfer of the cytidylyl group of CTP to D-ribitol 5-phosphate. This Lacticaseibacillus paracasei (strain ATCC 334 / BCRC 17002 / CCUG 31169 / CIP 107868 / KCTC 3260 / NRRL B-441) (Lactobacillus paracasei) protein is Ribitol-5-phosphate cytidylyltransferase.